A 376-amino-acid chain; its full sequence is N-acetyldiaminopimelate deacetylase (376 aa).

Aspartate 70 is a catalytic residue. The active-site Proton acceptor is glutamate 129.

This sequence belongs to the peptidase M20A family. N-acetyldiaminopimelate deacetylase subfamily.

It carries out the reaction N-acetyl-(2S,6S)-2,6-diaminopimelate + H2O = (2S,6S)-2,6-diaminopimelate + acetate. Its pathway is amino-acid biosynthesis; L-lysine biosynthesis via DAP pathway; LL-2,6-diaminopimelate from (S)-tetrahydrodipicolinate (acetylase route): step 3/3. In terms of biological role, catalyzes the conversion of N-acetyl-diaminopimelate to diaminopimelate and acetate. This chain is N-acetyldiaminopimelate deacetylase, found in Geobacillus sp. (strain WCH70).